We begin with the raw amino-acid sequence, 251 residues long: MLLIPAIDLKDGQCVRLKQGDMDQATIFSEDPAAMARKWVDLGARRLHLVDLNGAFAGKPKNLDAIEAILDEVGDEIPVQLGGGIRSLETVEKYLDAGLSYVIIGTAAVKDPGFLRDACTAFAGNIIVGLDAKDGKVATDGWSKLTGHEVIDLALKFEDYGVESIVYTDIGRDGMLQGINIEATVKLAQAVGIPVIASGGLSNLADIDSLCEVEEHGVEGVICGRAIYSGDLDFAAAQKRADELNGELDNA.

Aspartate 8 serves as the catalytic Proton acceptor. The Proton donor role is filled by aspartate 131.

Belongs to the HisA/HisF family.

The protein localises to the cytoplasm. The catalysed reaction is 1-(5-phospho-beta-D-ribosyl)-5-[(5-phospho-beta-D-ribosylamino)methylideneamino]imidazole-4-carboxamide = 5-[(5-phospho-1-deoxy-D-ribulos-1-ylimino)methylamino]-1-(5-phospho-beta-D-ribosyl)imidazole-4-carboxamide. The protein operates within amino-acid biosynthesis; L-histidine biosynthesis; L-histidine from 5-phospho-alpha-D-ribose 1-diphosphate: step 4/9. The sequence is that of 1-(5-phosphoribosyl)-5-[(5-phosphoribosylamino)methylideneamino] imidazole-4-carboxamide isomerase from Burkholderia ambifaria (strain MC40-6).